A 195-amino-acid chain; its full sequence is Imidazoleglycerol-phosphate dehydratase (195 aa).

Belongs to the imidazoleglycerol-phosphate dehydratase family.

Its subcellular location is the cytoplasm. The enzyme catalyses D-erythro-1-(imidazol-4-yl)glycerol 3-phosphate = 3-(imidazol-4-yl)-2-oxopropyl phosphate + H2O. It participates in amino-acid biosynthesis; L-histidine biosynthesis; L-histidine from 5-phospho-alpha-D-ribose 1-diphosphate: step 6/9. This is Imidazoleglycerol-phosphate dehydratase from Thiobacillus denitrificans (strain ATCC 25259 / T1).